A 312-amino-acid chain; its full sequence is MGVHLEVLDTGEQLMVPGDVLEEENKGTLWKFLLSGAMAGAVSRTGTAPLDRARVYMQVYSSKSNFRHLLSGLRSLVQEGGIRSLWRGNGINVLKIAPEYAIKFSVFEQSRNFFYGVHTSPSFQERVVAGSLAVAISQTLINPMEVLKTRLTLRFTGQYKGLLDCARQILERDGTRALYRGYLPNMLGIIPYACTDLAVYELLRCLWQKSGRDMKDPSGLVSLSSVTLSTTCGQMASYPLTLVRTRMQAQDTVEGSNPTMLGVFKRILNQQGWPGLYRGMTPTLLKVLPAGGISYLVYEAMKKTLGVQVLSR.

3 Solcar repeats span residues 27 to 113 (GTLW…SRNF), 121 to 206 (PSFQ…LRCL), and 217 to 304 (PSGL…MKKT). The next 6 membrane-spanning stretches (helical) occupy residues 33–50 (LLSG…TAPL), 88–107 (GNGI…FSVF), 131–144 (SLAV…INPM), 182–200 (YLPN…LAVY), 219–243 (GLVS…LTLV), and 279–298 (GMTP…YLVY).

This sequence belongs to the mitochondrial carrier (TC 2.A.29) family. As to expression, mainly expressed in testis and at lesser levels in brain.

Its subcellular location is the mitochondrion inner membrane. The catalysed reaction is Mg(2+)(out) + phosphate(in) + ATP(out) = Mg(2+)(in) + phosphate(out) + ATP(in). It catalyses the reaction ADP(out) + phosphate(in) + H(+)(out) = ADP(in) + phosphate(out) + H(+)(in). Functionally, calcium-independent ATP-Mg/Pi exchanger that catalyzes the electroneutral exchange of Mg-ATP or free ADP against an hydrogenphosphate and participates in the net transport of adenine nucleotides across the mitochondria inner membrane. The polypeptide is Calcium-independent mitochondrial carrier protein SCaMC-3L (Rattus norvegicus (Rat)).